Reading from the N-terminus, the 330-residue chain is AH receptor-interacting protein (330 aa).

Residue S43 is modified to Phosphoserine. The region spanning R54–Q146 is the PPIase FKBP-type domain. TPR repeat units follow at residues V179 to L212, T231 to N264, and V265 to M298.

As to quaternary structure, interacts with RET in the pituitary gland; this interaction prevents the formation of the AIP-survivin complex.

Its subcellular location is the cytoplasm. Functionally, may play a positive role in AHR-mediated (aromatic hydrocarbon receptor) signaling, possibly by influencing its receptivity for ligand and/or its nuclear targeting. The sequence is that of AH receptor-interacting protein (AIP) from Bos taurus (Bovine).